We begin with the raw amino-acid sequence, 323 residues long: Polycomb complex protein BMI-1-B (323 aa).

The segment at 18-57 adopts an RING-type zinc-finger fold; sequence CVLCGGYFIDAATIIECLHSFCKTCIVRYLETSKYCPICD. Residues 81–95 carry the Nuclear localization signal motif; it reads KLVPGLFKGEMKRRR. The tract at residues 238 to 310 is disordered; sequence PHTDRINNTS…HQNPFANRAR (73 aa). Positions 287-301 are enriched in low complexity; that stretch reads HISSTINGTNSSSSH.

As to quaternary structure, component of a PRC1-like complex. Interacts with cbx4.

The protein resides in the nucleus. In terms of biological role, component of a Polycomb group (PcG) multiprotein PRC1-like complex, a complex class required to maintain the transcriptionally repressive state of many genes, including Hox genes, throughout development. PcG PRC1 complex acts via chromatin remodeling and modification of histones; it mediates monoubiquitination of histone H2A 'Lys-119', rendering chromatin heritably changed in its expressibility. In the PRC1 complex, it is required to stimulate the E3 ubiquitin-protein ligase activity of rnf2. This chain is Polycomb complex protein BMI-1-B (bmi1b), found in Xenopus laevis (African clawed frog).